The sequence spans 525 residues: Cytochrome P450 703A2 (525 aa).

The helical transmembrane segment at 3 to 23 (PFLLSIILCSWIFVVVSWKKL) threads the bilayer. Residue C455 coordinates heme.

Belongs to the cytochrome P450 family. Heme is required as a cofactor.

It localises to the membrane. It catalyses the reaction dodecanoate + reduced [NADPH--hemoprotein reductase] + O2 = 7-hydroxydodecanoate + oxidized [NADPH--hemoprotein reductase] + H2O + H(+). Functionally, involved in pollen exine and anther epicuticular layer development. Catalyzes the in-chain hydroxylation of lauric acid (C12:0) preferentially on position 7, generating 7-hydroxylated lauric acid. Does not possess activity with other fatty acids (C14:0, C16:0, C16:1, and C18:0). Participates in a conserved pathway of in-chain hydroxylation of lauric acid required for anther cuticle and pollen exine formation. Directly regulated by TDR, a known regulator of tapetum programmed cell death (PCD) and pollen exine formation. This chain is Cytochrome P450 703A2, found in Oryza sativa subsp. japonica (Rice).